Consider the following 239-residue polypeptide: Pyridoxine 5'-phosphate synthase (239 aa).

Asparagine 7 is a binding site for 3-amino-2-oxopropyl phosphate. Residue 9 to 10 (DH) coordinates 1-deoxy-D-xylulose 5-phosphate. Arginine 18 is a 3-amino-2-oxopropyl phosphate binding site. Histidine 43 serves as the catalytic Proton acceptor. Arginine 45 and histidine 50 together coordinate 1-deoxy-D-xylulose 5-phosphate. Catalysis depends on glutamate 70, which acts as the Proton acceptor. Threonine 100 is a binding site for 1-deoxy-D-xylulose 5-phosphate. Catalysis depends on histidine 191, which acts as the Proton donor. Residues glycine 192 and 213–214 (GH) contribute to the 3-amino-2-oxopropyl phosphate site.

Belongs to the PNP synthase family. Homooctamer; tetramer of dimers.

Its subcellular location is the cytoplasm. The enzyme catalyses 3-amino-2-oxopropyl phosphate + 1-deoxy-D-xylulose 5-phosphate = pyridoxine 5'-phosphate + phosphate + 2 H2O + H(+). It functions in the pathway cofactor biosynthesis; pyridoxine 5'-phosphate biosynthesis; pyridoxine 5'-phosphate from D-erythrose 4-phosphate: step 5/5. Its function is as follows. Catalyzes the complicated ring closure reaction between the two acyclic compounds 1-deoxy-D-xylulose-5-phosphate (DXP) and 3-amino-2-oxopropyl phosphate (1-amino-acetone-3-phosphate or AAP) to form pyridoxine 5'-phosphate (PNP) and inorganic phosphate. The chain is Pyridoxine 5'-phosphate synthase from Gloeobacter violaceus (strain ATCC 29082 / PCC 7421).